Consider the following 313-residue polypeptide: tRNA dimethylallyltransferase (313 aa).

Residue 17-24 (GPTASGKT) coordinates ATP. Substrate is bound at residue 19–24 (TASGKT). 4 interaction with substrate tRNA regions span residues 42–45 (DSAL), 166–170 (QRLSR), 247–252 (RCVGYR), and 280–287 (KRQITWLR).

The protein belongs to the IPP transferase family. As to quaternary structure, monomer. Requires Mg(2+) as cofactor.

It catalyses the reaction adenosine(37) in tRNA + dimethylallyl diphosphate = N(6)-dimethylallyladenosine(37) in tRNA + diphosphate. Catalyzes the transfer of a dimethylallyl group onto the adenine at position 37 in tRNAs that read codons beginning with uridine, leading to the formation of N6-(dimethylallyl)adenosine (i(6)A). This is tRNA dimethylallyltransferase from Proteus mirabilis (strain HI4320).